The primary structure comprises 423 residues: Maintenance of mitochondrial morphology protein 1 (423 aa).

Residues 1–15 (MWLDDVASELSFTQG) are Lumenal-facing. The chain crosses the membrane as a helical span at residues 16 to 36 (LLLGQLSIVILIGAFIKFFIF). Topologically, residues 37–423 (GDPPSPDVSA…PGSMPGLSMA (387 aa)) are cytoplasmic. The region spanning 110-322 (QPESLDWFNV…EPRFQQIELP (213 aa)) is the SMP-LTD domain. Disordered regions lie at residues 327–370 (RKKN…EAET) and 394–423 (SEEG…LSMA). Residues 350-367 (RSRDVERDLREEARKEVE) show a composition bias toward basic and acidic residues.

This sequence belongs to the MMM1 family. As to quaternary structure, homodimer. Component of the ER-mitochondria encounter structure (ERMES) or MDM complex, composed of mmm1, mdm10, mdm12 and mdm34. A mmm1 homodimer associates with one molecule of mdm12 on each side in a pairwise head-to-tail manner, and the SMP-LTD domains of mmm1 and mdm12 generate a continuous hydrophobic tunnel for phospholipid trafficking.

It is found in the endoplasmic reticulum membrane. Component of the ERMES/MDM complex, which serves as a molecular tether to connect the endoplasmic reticulum (ER) and mitochondria. Components of this complex are involved in the control of mitochondrial shape and protein biogenesis, and function in nonvesicular lipid trafficking between the ER and mitochondria. The mdm12-mmm1 subcomplex functions in the major beta-barrel assembly pathway that is responsible for biogenesis of all outer membrane beta-barrel proteins, and acts in a late step after the SAM complex. The mdm10-mdm12-mmm1 subcomplex further acts in the TOM40-specific pathway after the action of the mdm12-mmm1 complex. Essential for establishing and maintaining the structure of mitochondria and maintenance of mtDNA nucleoids. The sequence is that of Maintenance of mitochondrial morphology protein 1 from Sclerotinia sclerotiorum (strain ATCC 18683 / 1980 / Ss-1) (White mold).